Here is a 1318-residue protein sequence, read N- to C-terminus: Major viral transcription factor ICP4 homolog (1318 aa).

Residues 1 to 11 (MSAEQRKKKKT) show a composition bias toward basic residues. Disordered regions lie at residues 1-108 (MSAE…ADGV), 123-324 (EAVR…RLER), 542-580 (LTGA…AASP), 606-630 (PASA…GGRR), 780-873 (LAAP…TPAP), and 1291-1318 (AGLA…LFGE). A compositionally biased stretch (pro residues) spans 44–56 (SPDPADGPPPTPN). Positions 74-91 (EENEDEADDAAADADADE) are enriched in acidic residues. Residues 133-143 (PERDGAQEEAA) show a composition bias toward basic and acidic residues. Positions 159-174 (GEENDDDDDDDDDDDR) are enriched in acidic residues. Residues 206 to 226 (APRRHHHHHHHRRRRAPRRRS) are compositionally biased toward basic residues. Composition is skewed to low complexity over residues 228-257 (ASDS…SASS) and 268-278 (RAPASAADHAA). Residues 299-308 (APRPSPPRAE) are compositionally biased toward pro residues. The segment covering 309–320 (PAPARTPAATAG) has biased composition (low complexity). A DNA-binding region spans residues 319–547 (AGRLERRRAR…ENAALTGART (229 aa)). A compositionally biased stretch (basic and acidic residues) spans 547-564 (TPDDGGDANRHDGDDARG). Over residues 566 to 580 (PAAAAAPLPSAAASP) the composition is skewed to low complexity. Composition is skewed to pro residues over residues 799–808 (ARAPPGGAPR) and 821–843 (AAAP…PPRP). Residues 844–863 (AALTRRPAEGPDPQGGWRRQ) show a composition bias toward low complexity. Positions 1303-1318 (DMDAELEDDDDGLFGE) are enriched in acidic residues.

Belongs to the herpesviridae ICP4 family. Homodimer. Interacts with transcriptional regulator ICP27; this interaction is required for proper incorporation of ICP4 into virions. Interacts with host TBP; theis interaction helps the stabilization of the pre-initiation complex on specific promoters. Interacts with host GTF2B. In terms of processing, ADP-ribosylated. Post-translationally, the long stretch of Ser is a major site of phosphorylation. Only the phosphorylated forms are capable of interacting with beta or gamma genes.

It is found in the host nucleus. The protein resides in the host cytoplasm. Its subcellular location is the virion tegument. Its function is as follows. Plays an essential role in the regulation of viral gene expression by both activating and repressing host RNA polymerase II-mediated transcription. Binds with high affinity to the sequence 5'-ATCGTC-3'. Activates transcription by recruiting a form of the host TFIID to promoters and stabilizing the pre-initiation complex formation. Negatively regulates its own transcription. This immediate early (IE) protein is absolutely necessary for the transition from IE transcription to later viral gene transcription. In addition, binds to the host promoters of CXCR3 ligands including CXCL9, CXCL10, and CXCL11 and interacts with TBP to activate their transcription. In turn, mediates CD4+ T-cell migration. This Human herpesvirus 2 (strain HG52) (HHV-2) protein is Major viral transcription factor ICP4 homolog (ICP4).